Here is a 172-residue protein sequence, read N- to C-terminus: MAIGLAGKKAIVKEVNDVASNALAVTVAEYRGIEVADMTALRKKAREQGIFVKVVRNTLAKRAFEGTQFDDMGDALKGPLVYGFSMDAPGASARLFKDFSKENKNLQVTALSIGNGIMGPEKLDAVASLPTRDEALAKLLATFKEPVSKFVKTVNEVPSKFVRTLAAIKDAK.

The protein belongs to the universal ribosomal protein uL10 family. In terms of assembly, part of the ribosomal stalk of the 50S ribosomal subunit. The N-terminus interacts with L11 and the large rRNA to form the base of the stalk. The C-terminus forms an elongated spine to which L12 dimers bind in a sequential fashion forming a multimeric L10(L12)X complex.

In terms of biological role, forms part of the ribosomal stalk, playing a central role in the interaction of the ribosome with GTP-bound translation factors. This is Large ribosomal subunit protein uL10 from Idiomarina loihiensis (strain ATCC BAA-735 / DSM 15497 / L2-TR).